Here is a 154-residue protein sequence, read N- to C-terminus: Xanthine-guanine phosphoribosyltransferase (154 aa).

5-phospho-alpha-D-ribose 1-diphosphate-binding positions include 37 to 38 (RG) and 90 to 98 (DDLVDTGNT). Position 91 (Asp-91) interacts with Mg(2+). Asp-94 and Ile-137 together coordinate guanine. Xanthine-binding residues include Asp-94 and Ile-137. Residues 94–98 (DTGNT) and 136–137 (WI) each bind GMP.

It belongs to the purine/pyrimidine phosphoribosyltransferase family. XGPT subfamily. In terms of assembly, homotetramer. Mg(2+) is required as a cofactor.

Its subcellular location is the cell inner membrane. The catalysed reaction is GMP + diphosphate = guanine + 5-phospho-alpha-D-ribose 1-diphosphate. It catalyses the reaction XMP + diphosphate = xanthine + 5-phospho-alpha-D-ribose 1-diphosphate. The enzyme catalyses IMP + diphosphate = hypoxanthine + 5-phospho-alpha-D-ribose 1-diphosphate. It functions in the pathway purine metabolism; GMP biosynthesis via salvage pathway; GMP from guanine: step 1/1. It participates in purine metabolism; XMP biosynthesis via salvage pathway; XMP from xanthine: step 1/1. Functionally, purine salvage pathway enzyme that catalyzes the transfer of the ribosyl-5-phosphate group from 5-phospho-alpha-D-ribose 1-diphosphate (PRPP) to the N9 position of the 6-oxopurines guanine and xanthine to form the corresponding ribonucleotides GMP (guanosine 5'-monophosphate) and XMP (xanthosine 5'-monophosphate), with the release of PPi. To a lesser extent, also acts on hypoxanthine. The sequence is that of Xanthine-guanine phosphoribosyltransferase from Histophilus somni (strain 129Pt) (Haemophilus somnus).